The chain runs to 365 residues: MNFQFLAIFSVRLATKEEVLDRTQESGDVNVVWVFTYNSNREFSVFEFILINFLFLLSIFVTFIGVFCIGKSNIPHRNARWIIISGMLLWLELVVSRSFVFIFQWSSDGLQSRSGLLFWAALLRYHYMFFGVHTLLCITAERAMATILLKDYETRPRVWIAAILIGANFLISLTYAFLAVFQQILMKSIFIVCLAVAVVSIILLEIIYFLNRKRLDSLIRHDNTMVLYTLSIKYQLQENVRSCRLMRPAVVVVGAFIIMLILAECLPIILDFSDEVQMWCNLIFDTTVHTDPLVVVPTVVALMESFRKVFLSYYRTLQHKIRPNTVAVIRRKSIFPFTKPKETEGDIYFEMFNKSVSPNSLAVKK.

7 consecutive transmembrane segments (helical) span residues 49 to 69 (ILIN…VFCI), 82 to 102 (IIIS…FVFI), 116 to 136 (LLFW…HTLL), 158 to 178 (VWIA…YAFL), 189 to 209 (IFIV…IIYF), 250 to 270 (VVVV…PIIL), and 292 to 314 (PLVV…LSYY).

It belongs to the nematode receptor-like protein sre family.

Its subcellular location is the membrane. This is Serpentine receptor class epsilon-21 (sre-21) from Caenorhabditis elegans.